A 157-amino-acid polypeptide reads, in one-letter code: Small heat shock protein ibp (157 aa).

A sHSP domain is found at 35-148 (EKPISDTPTY…KPKKISINVP (114 aa)).

This sequence belongs to the small heat shock protein (HSP20) family.

The chain is Small heat shock protein ibp (ibp) from Buchnera aphidicola subsp. Acyrthosiphon pisum (strain APS) (Acyrthosiphon pisum symbiotic bacterium).